Here is a 442-residue protein sequence, read N- to C-terminus: tRNA modification GTPase MnmE (442 aa).

3 residues coordinate (6S)-5-formyl-5,6,7,8-tetrahydrofolate: Arg27, Glu84, and Lys124. Residues 221 to 366 (GLHVVIVGAP…LLDALQAFAE (146 aa)) enclose the TrmE-type G domain. GTP contacts are provided by residues 231–236 (NAGKSS), 250–256 (SEEAGTT), and 275–278 (DTAG). Positions 235 and 256 each coordinate Mg(2+). Lys442 provides a ligand contact to (6S)-5-formyl-5,6,7,8-tetrahydrofolate.

It belongs to the TRAFAC class TrmE-Era-EngA-EngB-Septin-like GTPase superfamily. TrmE GTPase family. As to quaternary structure, homodimer. Heterotetramer of two MnmE and two MnmG subunits. It depends on K(+) as a cofactor.

It is found in the cytoplasm. Functionally, exhibits a very high intrinsic GTPase hydrolysis rate. Involved in the addition of a carboxymethylaminomethyl (cmnm) group at the wobble position (U34) of certain tRNAs, forming tRNA-cmnm(5)s(2)U34. In Brucella ovis (strain ATCC 25840 / 63/290 / NCTC 10512), this protein is tRNA modification GTPase MnmE.